We begin with the raw amino-acid sequence, 116 residues long: Ribosome-binding factor A (116 aa).

The protein belongs to the RbfA family. In terms of assembly, monomer. Binds 30S ribosomal subunits, but not 50S ribosomal subunits or 70S ribosomes.

It localises to the cytoplasm. In terms of biological role, one of several proteins that assist in the late maturation steps of the functional core of the 30S ribosomal subunit. Associates with free 30S ribosomal subunits (but not with 30S subunits that are part of 70S ribosomes or polysomes). Required for efficient processing of 16S rRNA. May interact with the 5'-terminal helix region of 16S rRNA. The protein is Ribosome-binding factor A of Clostridium botulinum (strain Alaska E43 / Type E3).